The primary structure comprises 759 residues: Tripartite motif-containing protein 46 (759 aa).

A required for proximal axon localization, axon formation and migration region spans residues 1-166 (MAEGEDMQTF…VERYRQSVSV (166 aa)). The RING-type 1; degenerate zinc-finger motif lies at 33 to 59 (CPVCQEMYKQPLVLPCTHNVCQACARE). The disordered stretch occupies residues 67 to 98 (IGHGGDPSSEPTSPASTPSTRSPRLSRRTLPK). The segment covering 73-89 (PSSEPTSPASTPSTRSP) has biased composition (low complexity). An RING-type 2; degenerate zinc finger spans residues 172–231 (CQLCKPPPLEATKGCSECRATFCNECFKLFHPWGTQKAQHEPTLPTLSFRPKGLMCPDHK). The segment at 222-263 (PKGLMCPDHKEEVTHYCKTCQRLVCQLCRVRRTHSGHKITPV) adopts a B box-type zinc-finger fold. Residues Cys227, His230, Cys249, and His255 each contribute to the Zn(2+) site. Residues 294–400 (ELEETIRHTE…RATEALQTFR (107 aa)) are a coiled coil. Position 330 is a phosphoserine (Ser330). Residues 370–427 (LKETDQPCFVQAAKQLHNRIARATEALQTFRPAASSSFRHCQLDVGREMKLLTELNFL) form the COS domain. Residues 411–429 (QLDVGREMKLLTELNFLRV) are required for microtubule association, proximal axon localization and axon formation. Residues 429–528 (VPEAPVIDTQ…EDVHLHTPPA (100 aa)) form the Fibronectin type-III domain. Residues 513-747 (GYGEYSEDVH…LQEPVGTKPE (235 aa)) enclose the B30.2/SPRY domain. Ser627 carries the post-translational modification Phosphoserine.

This sequence belongs to the TRIM/RBCC family. Interacts with TUBB3 and TUBA4A. As to expression, expressed in primary hippocampal and cortical neurons.

It is found in the cell projection. Its subcellular location is the axon. The protein resides in the cytoplasm. It localises to the cytoskeleton. Functionally, microtubule-associated protein that is involved in the formation of parallel microtubule bundles linked by cross-bridges in the proximal axon. Required for the uniform orientation and maintenance of the parallel microtubule fascicles, which are important for efficient cargo delivery and trafficking in axons. Thereby also required for proper axon specification, the establishment of neuronal polarity and proper neuronal migration. The polypeptide is Tripartite motif-containing protein 46 (Rattus norvegicus (Rat)).